A 584-amino-acid polypeptide reads, in one-letter code: Long-chain-fatty-acid--AMP ligase FadD26 (584 aa).

It belongs to the ATP-dependent AMP-binding enzyme family.

The catalysed reaction is holo-[(phenol)carboxyphthiodiolenone synthase] + a long-chain fatty acid + ATP = a long-chain fatty acyl-[(phenol)carboxyphthiodiolenone synthase] + AMP + diphosphate. The enzyme catalyses eicosanoate + holo-[(phenol)carboxyphthiodiolenone synthase] + ATP = icosanoyl-[(phenol)carboxyphthiodiolenone synthase] + AMP + diphosphate. It catalyses the reaction holo-[(phenol)carboxyphthiodiolenone synthase] + docosanoate + ATP = docosanoyl-[(phenol)carboxyphthiodiolenone synthase] + AMP + diphosphate. Its pathway is lipid metabolism; fatty acid biosynthesis. In terms of biological role, catalyzes the activation of long-chain fatty acids as acyl-adenylates (acyl-AMP), which are then transferred to the multifunctional polyketide synthase PpsA for further chain extension. Catalyzes the adenylation of the long-chain fatty acids eicosanoate (C20) or docosanoate (C22), and potentially the very-long-chain fatty acid lignocerate (C24). Involved in the biosynthesis of phthiocerol dimycocerosate (DIM A) and phthiodiolone dimycocerosate (DIM B). The protein is Long-chain-fatty-acid--AMP ligase FadD26 of Mycobacterium marinum (strain ATCC BAA-535 / M).